Reading from the N-terminus, the 323-residue chain is Thymidylate synthase (323 aa).

DUMP-binding positions include Arg-21 and 172-173; that span reads RR. Cys-192 serves as the catalytic Nucleophile. Residues 214–217, Asn-225, and 255–257 contribute to the dUMP site; these read RSND and HVY. Residue Asp-217 participates in (6R)-5,10-methylene-5,6,7,8-tetrahydrofolate binding. Position 322 (Ala-322) interacts with (6R)-5,10-methylene-5,6,7,8-tetrahydrofolate.

This sequence belongs to the thymidylate synthase family. Bacterial-type ThyA subfamily. In terms of assembly, homodimer.

Its subcellular location is the cytoplasm. The catalysed reaction is dUMP + (6R)-5,10-methylene-5,6,7,8-tetrahydrofolate = 7,8-dihydrofolate + dTMP. It participates in pyrimidine metabolism; dTTP biosynthesis. Catalyzes the reductive methylation of 2'-deoxyuridine-5'-monophosphate (dUMP) to 2'-deoxythymidine-5'-monophosphate (dTMP) while utilizing 5,10-methylenetetrahydrofolate (mTHF) as the methyl donor and reductant in the reaction, yielding dihydrofolate (DHF) as a by-product. This enzymatic reaction provides an intracellular de novo source of dTMP, an essential precursor for DNA biosynthesis. This chain is Thymidylate synthase, found in Pseudomonas syringae pv. tomato (strain ATCC BAA-871 / DC3000).